The sequence spans 622 residues: Protein lev-9 (622 aa).

Residues 1–16 (MRFLLLLAISITYASA) form the signal peptide. The 45-residue stretch at 17–61 (LSCPEVTLSQRPKHCKKECIADEDCKRNKRCMCDGECGLSCVNPI) folds into the WAP; atypical domain. 19 disulfide bridges follow: Cys19–Cys49, Cys35–Cys47, Cys41–Cys57, Cys64–Cys105, Cys91–Cys118, Cys124–Cys171, Cys154–Cys188, Cys193–Cys233, Cys219–Cys246, Cys251–Cys291, Cys277–Cys304, Cys309–Cys349, Cys335–Cys362, Cys366–Cys409, Cys395–Cys420, Cys425–Cys467, Cys452–Cys481, Cys486–Cys543, and Cys529–Cys556. Sushi domains lie at 62–120 (AMCH…VCRL), 122–190 (LKCG…RCKA), 191–248 (RACP…NCKA), 249–306 (TECS…RCEE), 307–364 (IRCS…RCLA), 365–422 (SCRV…VCSP), 423–483 (LSCH…KCLP), and 484–558 (SWCE…KCVS). Asn411 carries an N-linked (GlcNAc...) asparagine glycan. The propeptide occupies 576 to 622 (SLPGRAVREYVDDELSTHRQHSGKCGIVSGKLERMIMQHSDNGVSVC).

Post-translationally, proteolytic processing of the C-terminus is required for clustering activity but not for secretion nor traffic.

The protein localises to the synapse. Its subcellular location is the secreted. Its function is as follows. Scaffolding protein that is necessary to cluster acetylcholine receptors at neuromuscular junctions. In Caenorhabditis elegans, this protein is Protein lev-9 (lev-9).